The following is a 475-amino-acid chain: Splicing factor U2AF 65 kDa subunit (475 aa).

The interval Met-1–Lys-90 is disordered. Ser-2 is modified (N-acetylserine). The residue at position 2 (Ser-2) is a Phosphoserine. The tract at residues Ser-2–Asp-93 is required for interaction with PRPF19. A compositionally biased stretch (basic and acidic residues) spans Phe-7–Asn-22. Position 15 is a 5-hydroxylysine; by JMJD6; alternate (Lys-15). Lys-15 participates in a covalent cross-link: Glycyl lysine isopeptide (Lys-Gly) (interchain with G-Cter in SUMO2); alternate. The tract at residues Glu-17–Arg-47 is necessary and sufficient to stimulate pre-mRNAs 3'-end cleavage in a CFIm complex-dependent manner. Basic residues predominate over residues Arg-23–Arg-46. The segment covering Arg-47 to Arg-56 has biased composition (basic and acidic residues). Lys-70 is covalently cross-linked (Glycyl lysine isopeptide (Lys-Gly) (interchain with G-Cter in SUMO2); alternate). Residue Lys-70 is modified to N6-acetyllysine; alternate. At Ser-79 the chain carries Phosphoserine. Over residues Ser-79–Arg-89 the composition is skewed to basic residues. RRM domains are found at residues Arg-149 to Asp-231, His-259 to Val-337, and Leu-385 to Pro-466. Residue Lys-276 is modified to 5-hydroxylysine; by JMJD6. At Ser-294 the chain carries Phosphoserine.

It belongs to the splicing factor SR family. In terms of assembly, interacts with U2AF1L4. Heterodimer with U2AF1. Binds unphosphorylated SF1. Interacts with SCAF11 and SNW1. Interacts with ZRSR2/U2AF1-RS2. Interacts with RBM17. Interacts with PRPF19; the interaction is direct. Interacts with POLR2A (via the C-terminal domain); recruits PRPF19 and the Prp19 complex to the pre-mRNA. Interacts with KHDC4 (Isoform 2). Interacts with ZRSR2. Interacts with the SF3B complex composed of SF3B1, SF3B2, SF3B3, SF3B4, SF3B5, SF3B6 and PHF5A. Interacts (via N-terminus) with CPSF7 (via C-terminus); this interaction stimulates pre-mRNA 3'-end processing by promoting the recruitment of the CFIm complex to cleavage and polyadenylation signals. Interacts with ARGLU1; interaction may be involved in ARGLU1-mediated modulation of alternative splicing. In terms of processing, lysyl-hydroxylation at Lys-15 and Lys-276 affects the mRNA splicing activity of the protein, leading to regulate some, but not all, alternative splicing events.

Its subcellular location is the nucleus. In terms of biological role, plays a role in pre-mRNA splicing and 3'-end processing. By recruiting PRPF19 and the PRP19C/Prp19 complex/NTC/Nineteen complex to the RNA polymerase II C-terminal domain (CTD), and thereby pre-mRNA, may couple transcription to splicing. Induces cardiac troponin-T (TNNT2) pre-mRNA exon inclusion in muscle. Regulates the TNNT2 exon 5 inclusion through competition with MBNL1. Binds preferentially to a single-stranded structure within the polypyrimidine tract of TNNT2 intron 4 during spliceosome assembly. Required for the export of mRNA out of the nucleus, even if the mRNA is encoded by an intron-less gene. Represses the splicing of MAPT/Tau exon 10. Positively regulates pre-mRNA 3'-end processing by recruiting the CFIm complex to cleavage and polyadenylation signals. The chain is Splicing factor U2AF 65 kDa subunit (U2AF2) from Homo sapiens (Human).